The following is a 1641-amino-acid chain: Cortactin-binding protein 2 (1641 aa).

The segment at 1 to 27 (MATDGASCEPDFSRAPEDAAGAPAEAA) is disordered. Residues 119 to 276 (RKMQERMSTQ…EQLKRGNDSK (158 aa)) adopt a coiled-coil conformation. Disordered regions lie at residues 361-433 (SHGD…HPGL), 446-472 (GSNA…PTSR), and 488-588 (ALSR…PQGN). Positions 385–405 (GPSTGSTPDLTSSPTALPSTV) are enriched in polar residues. An Asymmetric dimethylarginine modification is found at arginine 491. Over residues 497–506 (AGAPPRPGAP) the composition is skewed to pro residues. Over residues 576–586 (TVASSPSSLPQ) the composition is skewed to polar residues. ANK repeat units follow at residues 702-732 (GRPT…DINY), 736-765 (DGHS…QVNA), 769-798 (NGFT…NINH), 802-831 (GGQT…DRSV), 835-864 (DGWT…PAHG), and 903-933 (EGWT…EPER). A disordered region spans residues 1442–1468 (AWRKVSTSPRKKSGRFSSPTWNKPDLS). Serine 1512 bears the Phosphoserine mark. The segment at 1544-1641 (LRRFDSSGNN…NSRDLEPTQK (98 aa)) is disordered. Composition is skewed to polar residues over residues 1551–1562 (GNNPVFSATVNN) and 1570–1579 (KEVSPLSSHQ). The span at 1580-1590 (MTERSNSKSKT) shows a compositional bias: basic and acidic residues. Positions 1612 to 1626 (SQNTKRSSSSSNTRQ) are enriched in low complexity.

Interacts with CTTN/cortactin SH3 domain. Interacts with STRN, STRN4/zinedin and MOB4/phocein; this interactions mediate the association with the STRIPAK core complex and may regulate dendritic spine distribution of the STRIPAK complex in hippocampal neurons. Activation of glutamate receptors weakens the interaction with STRN and STRN4.

The protein localises to the cytoplasm. It is found in the cell cortex. The protein resides in the cell projection. It localises to the dendritic spine. In terms of biological role, regulates the dendritic spine distribution of CTTN/cortactin in hippocampal neurons, and thus controls dendritic spinogenesis and dendritic spine maintenance. Associates with the striatin-interacting phosphatase and kinase (STRIPAK) core complex to regulate dendritic spine distribution of the STRIPAK complex in hippocampal neurons. This is Cortactin-binding protein 2 (CTTNBP2) from Ovis aries (Sheep).